The sequence spans 113 residues: NTGAKAPRKHLANKAARKTAAPANAGIKKPHRYRPGTVALREIRKYQKSTDLLIRKLPFQRLVREIASEYKNDLRFQSSAVLALQEAAEAYMIGLFEDTNLCAIHGKRVTIMP.

Over residues 1–17 (NTGAKAPRKHLANKAAR) the composition is skewed to basic residues. A disordered region spans residues 1–31 (NTGAKAPRKHLANKAARKTAAPANAGIKKPH).

The protein belongs to the histone H3 family. As to quaternary structure, the nucleosome is a histone octamer containing two molecules each of H2A, H2B, H3 and H4 assembled in one H3-H4 heterotetramer and two H2A-H2B heterodimers. The octamer wraps approximately 147 bp of DNA.

The protein localises to the nucleus. The protein resides in the chromosome. Core component of nucleosome. Nucleosomes wrap and compact DNA into chromatin, limiting DNA accessibility to the cellular machineries which require DNA as a template. Histones thereby play a central role in transcription regulation, DNA repair, DNA replication and chromosomal stability. DNA accessibility is regulated via a complex set of post-translational modifications of histones, also called histone code, and nucleosome remodeling. This is Histone H3-8 (H3-8) from Stylonychia lemnae (Ciliate).